The primary structure comprises 359 residues: Type II restriction enzyme HgiDI (359 aa).

It carries out the reaction Endonucleolytic cleavage of DNA to give specific double-stranded fragments with terminal 5'-phosphates.. A P subtype restriction enzyme that recognizes the double-stranded sequence 5'-GRCGYC-3' and cleaves after R-2. This chain is Type II restriction enzyme HgiDI, found in Herpetosiphon aurantiacus (Herpetosiphon giganteus).